The following is a 708-amino-acid chain: MSFKDKDERISCLEAYVTLTSKSSRFTDETEILKMSQRHSGQAGTEAGNGADSPPIVNSKYSTFRDFCSTSSFQDSGYNELKSCSFDNIDKEYLGKKEKGPTLLYEHPETSGLGLTHPLESPTQKKKCILPRKEKDKTPELCETPKISGKKCLPRRRLNVSFALLKGDFESQNSSLESSISQVINLEKNIPSSASGFSRANNFSPLVTSTLKTEEVTSCSQKLRLNFSQQKTSTIDDSKDDCSLFEVECISPIQGNNFKDSITHDFSDSSLCINDENACPELLGSSVSGTTCGTDEDIFVTPISNLVANIRFNASQILSPSPEVRGSISTPEDSGFNSLSLEKSEDSLSDQEGSFQELLQKHKGTPKVGDTIRKTRHLGRSRRLSTLREQSSQSETEEEKQIVHPDSEKRAAAASAISEGQLSSDESGDLTFSLKNLSKTPALQLVHELFMKSKRKRLQENSGHEFLEQGDGEKIAVLQCILAGLIGKKMGIEKLDILTELKYRNLKHILAMVLESLTAESLCSVWKVSRNWREIVVQDKNANRRRKFYITQLKTDSEGAVLNVEDAATRLQLLNRSALRSVQAQARIPGSQREQGSTLSPWGEVLTPLASSSVTHLSSKQEEYVKVAKTLFTDEALKPCPRCQSPAKYQPYKKRGLCSRTACGFDFCVLCLCAYHGSEECSRGAAKPRNRKDALPGSAQSKRNLKRL.

The disordered stretch occupies residues 35–55; it reads MSQRHSGQAGTEAGNGADSPP. A Phosphoserine modification is found at serine 76. Threonine 234 is modified (phosphothreonine). The tract at residues 320 to 426 is disordered; that stretch reads PSPEVRGSIS…ISEGQLSSDE (107 aa). Residues 327–337 show a composition bias toward polar residues; sequence SISTPEDSGFN. Phosphoserine is present on serine 334. A compositionally biased stretch (basic residues) spans 374–385; that stretch reads KTRHLGRSRRLS. Positions 399 to 411 are enriched in basic and acidic residues; sequence EKQIVHPDSEKRA. Positions 490-547 constitute an F-box domain; the sequence is MGIEKLDILTELKYRNLKHILAMVLESLTAESLCSVWKVSRNWREIVVQDKNANRRRK. Residues 636–684 form a ZBR-type zinc finger; sequence ALKPCPRCQSPAKYQPYKKRGLCSRTACGFDFCVLCLCAYHGSEECSRG. Zn(2+) contacts are provided by cysteine 640, cysteine 643, cysteine 658, cysteine 663, cysteine 668, cysteine 671, histidine 676, and cysteine 681. Residues 682–708 form a disordered region; it reads SRGAAKPRNRKDALPGSAQSKRNLKRL.

In terms of assembly, part of a SCF (SKP1-cullin-F-box) protein ligase complex. According to PubMed:34595750 interaction with SKP1 does not occur. Interacts with ANAPC2; the interaction is direct, ANAPC4, CDC16, CDC23; the interaction is direct, ANAPC10; the interaction is direct and CDC26, during spermatogenesis. May interact with CDC20. Phosphorylated on Ser-76, Thr-234 and Ser-334 in response to calcium, which is a prerequisite for ubiquitination and proteasomal degradation. Post-translationally, ubiquitinated in response to calcium, which promotes proteasomal degradation. In terms of tissue distribution, expressed in the testis.

It participates in protein modification; protein ubiquitination. Required to establish and maintain the arrest of oocytes at the second meiotic metaphase until fertilization. Acts by inhibiting the anaphase-promoting complex/cyclosome (APC/C) ubiquitin ligase. Probably recognizes and binds to some phosphorylated proteins and promotes their ubiquitination and degradation. Plays a vital role in modulating the ubiquitilation of CCNB1 and CDK1 during gametogenesis. The polypeptide is F-box only protein 43 (FBXO43) (Homo sapiens (Human)).